The sequence spans 364 residues: Alanine racemase (364 aa).

Catalysis depends on lysine 35, which acts as the Proton acceptor; specific for D-alanine. N6-(pyridoxal phosphate)lysine is present on lysine 35. Position 132 (arginine 132) interacts with substrate. Residue tyrosine 260 is the Proton acceptor; specific for L-alanine of the active site. Methionine 308 provides a ligand contact to substrate.

The protein belongs to the alanine racemase family. Pyridoxal 5'-phosphate is required as a cofactor.

The enzyme catalyses L-alanine = D-alanine. Its pathway is amino-acid biosynthesis; D-alanine biosynthesis; D-alanine from L-alanine: step 1/1. Functionally, catalyzes the interconversion of L-alanine and D-alanine. May also act on other amino acids. This is Alanine racemase (alr) from Acidithiobacillus ferrooxidans (strain ATCC 23270 / DSM 14882 / CIP 104768 / NCIMB 8455) (Ferrobacillus ferrooxidans (strain ATCC 23270)).